Consider the following 188-residue polypeptide: Elongation factor P (188 aa).

This sequence belongs to the elongation factor P family.

Its subcellular location is the cytoplasm. The protein operates within protein biosynthesis; polypeptide chain elongation. In terms of biological role, involved in peptide bond synthesis. Stimulates efficient translation and peptide-bond synthesis on native or reconstituted 70S ribosomes in vitro. Probably functions indirectly by altering the affinity of the ribosome for aminoacyl-tRNA, thus increasing their reactivity as acceptors for peptidyl transferase. The chain is Elongation factor P from Malacoplasma penetrans (strain HF-2) (Mycoplasma penetrans).